Here is a 612-residue protein sequence, read N- to C-terminus: Probable cytosolic Fe-S cluster assembly factor SJAG_02895 (612 aa).

Residue 13 to 20 (GKGGVGKS) coordinates ATP. [4Fe-4S] cluster is bound by residues Cys-200 and Cys-203. WD repeat units follow at residues 287-326 (GHRG…LIHV), 330-370 (YHTR…WECV), 375-414 (GHEN…EFDC), 420-459 (EHTQ…WVQT), 464-503 (SHTS…EDAA), 528-566 (TFTE…STWH), and 574-612 (AHDV…DQTA).

It in the N-terminal section; belongs to the Mrp/NBP35 ATP-binding proteins family. NUBP2/CFD1 subfamily. The protein in the C-terminal section; belongs to the WD repeat CIA1 family. In terms of assembly, heterotetramer of 2 nbp35 and 2 SJAG_02895 chains. Requires [4Fe-4S] cluster as cofactor.

Its subcellular location is the cytoplasm. It localises to the nucleus. Fusion protein of two essential components of the cytosolic iron-sulfur (Fe/S) protein assembly (CIA) machinery. Required for maturation of extramitochondrial Fe-S proteins. May form a heterotetramer with nubp35, functioning as a Fe-S scaffold complex, mediating the de novo assembly of an Fe-S cluster and its transfer to target apoproteins. The protein is Probable cytosolic Fe-S cluster assembly factor SJAG_02895 of Schizosaccharomyces japonicus (strain yFS275 / FY16936) (Fission yeast).